A 286-amino-acid chain; its full sequence is Cytochrome c oxidase subunit 3 (286 aa).

Transmembrane regions (helical) follow at residues 13–33 (GVFL…GVVI), 40–60 (VGTF…CFLI), 85–105 (IIQY…VVFF), 133–153 (IILD…NIIL), 173–195 (LCRE…LLFI), 199–221 (VWEF…LFSI), 223–243 (TLHF…IFNI), and 253–273 (IVLI…WFFL).

It belongs to the cytochrome c oxidase subunit 3 family. In terms of assembly, component of the cytochrome c oxidase (complex IV, CIV), a multisubunit enzyme composed of a catalytic core of 3 subunits and several supernumerary subunits. The complex exists as a monomer or a dimer and forms supercomplexes (SCs) in the inner mitochondrial membrane with ubiquinol-cytochrome c oxidoreductase (cytochrome b-c1 complex, complex III, CIII).

The protein localises to the mitochondrion inner membrane. It carries out the reaction 4 Fe(II)-[cytochrome c] + O2 + 8 H(+)(in) = 4 Fe(III)-[cytochrome c] + 2 H2O + 4 H(+)(out). Its function is as follows. Component of the cytochrome c oxidase, the last enzyme in the mitochondrial electron transport chain which drives oxidative phosphorylation. The respiratory chain contains 3 multisubunit complexes succinate dehydrogenase (complex II, CII), ubiquinol-cytochrome c oxidoreductase (cytochrome b-c1 complex, complex III, CIII) and cytochrome c oxidase (complex IV, CIV), that cooperate to transfer electrons derived from NADH and succinate to molecular oxygen, creating an electrochemical gradient over the inner membrane that drives transmembrane transport and the ATP synthase. Cytochrome c oxidase is the component of the respiratory chain that catalyzes the reduction of oxygen to water. Electrons originating from reduced cytochrome c in the intermembrane space (IMS) are transferred via the dinuclear copper A center (CU(A)) of subunit 2 and heme A of subunit 1 to the active site in subunit 1, a binuclear center (BNC) formed by heme A3 and copper B (CU(B)). The BNC reduces molecular oxygen to 2 water molecules using 4 electrons from cytochrome c in the IMS and 4 protons from the mitochondrial matrix. The polypeptide is Cytochrome c oxidase subunit 3 (COIII) (Trypanoplasma borreli).